We begin with the raw amino-acid sequence, 532 residues long: Vesicular acetylcholine transporter unc-17 (532 aa).

Topologically, residues 1–31 (MGFNVPVINRDSEILKADAKKWLEQQDNQKK) are cytoplasmic. A helical membrane pass occupies residues 32-52 (CVLVIVSIALLLDNMLYMVIV). The Lumenal, vesicle segment spans residues 53-101 (PIIPKYLRDIHNYQVTFEGYHNETSQLANGTYLVREVGGRINFLDEELE). Residues asparagine 74 and asparagine 81 are each glycosylated (N-linked (GlcNAc...) asparagine). Residues 102-121 (LGWLFASKALLQIFVNPFSG) traverse the membrane as a helical segment. Topologically, residues 122-130 (YIIDRVGYE) are cytoplasmic. Residues 131 to 151 (IPMILGLCTMFFSTAIFALGK) form a helical membrane-spanning segment. Over 152–160 (SYGVLLFAR) the chain is Lumenal, vesicle. A helical membrane pass occupies residues 161-180 (SLQGFGSAFADTSGLAMIAD). The Cytoplasmic segment spans residues 181 to 191 (RFTEENERSAA). Residues 192 to 213 (LGIALAFISFGCLVAPPFGSVL) traverse the membrane as a helical segment. At 214–219 (YSLAGK) the chain is on the lumenal, vesicle side. Residues 220-242 (PVPFLILSFVCLADAIAVFMVIN) form a helical membrane-spanning segment. Residues 243 to 266 (PHRRGTDSHGEKVQGTPMWRLFMD) are Cytoplasmic-facing. Residues 267 to 286 (PFIACCSGALIMANVSLAFL) traverse the membrane as a helical segment. Topologically, residues 287–303 (EPTITTWMSEMMPDTPG) are lumenal, vesicle. A helical transmembrane segment spans residues 304–328 (WLVGVIWLPPFFPHVLGVYVTVKML). Over 329–335 (RAFPHHT) the chain is Cytoplasmic. Residues 336 to 356 (WAIAMVGLAMEGIACFAIPYT) form a helical membrane-spanning segment. Topologically, residues 357 to 367 (TSVMQLVIPLS) are lumenal, vesicle. The helical transmembrane segment at 368-388 (FVCFGIALIDTSLLPMLGHLV) threads the bilayer. The Cytoplasmic portion of the chain corresponds to 389–393 (DTRHV). Residues 394-412 (SVYGSVYAIADISYSLAYA) traverse the membrane as a helical segment. Over 413–418 (FGPIIA) the chain is Lumenal, vesicle. The helical transmembrane segment at 419–440 (GWIVTNWGFTALNIIIFATNVT) threads the bilayer. Over 441-532 (YAPVLFLLRK…AGYDPLNPQW (92 aa)) the chain is Cytoplasmic.

This sequence belongs to the major facilitator superfamily. Vesicular transporter family. In terms of tissue distribution, detected in most regions of the nervous system including the nerve ring, the ventral and dorsal nerve cords, and the pharyngeal nervous system. Expressed in most cholinergic neurons. In addition, expressed in SIA, SIB and SMB sublateral motor neurons.

It localises to the cytoplasmic vesicle. The protein resides in the secretory vesicle. The protein localises to the synaptic vesicle membrane. Involved in acetylcholine transport into synaptic vesicles. The chain is Vesicular acetylcholine transporter unc-17 from Caenorhabditis elegans.